A 692-amino-acid chain; its full sequence is Glycine--tRNA ligase beta subunit (692 aa).

Belongs to the class-II aminoacyl-tRNA synthetase family. In terms of assembly, tetramer of two alpha and two beta subunits.

Its subcellular location is the cytoplasm. The enzyme catalyses tRNA(Gly) + glycine + ATP = glycyl-tRNA(Gly) + AMP + diphosphate. This is Glycine--tRNA ligase beta subunit from Alteromonas mediterranea (strain DSM 17117 / CIP 110805 / LMG 28347 / Deep ecotype).